The primary structure comprises 153 residues: 6,7-dimethyl-8-ribityllumazine synthase (153 aa).

5-amino-6-(D-ribitylamino)uracil contacts are provided by residues Phe-21, 55 to 57 (AFE), and 79 to 81 (TVI). (2S)-2-hydroxy-3-oxobutyl phosphate is bound at residue 84–85 (AT). His-87 acts as the Proton donor in catalysis. 5-amino-6-(D-ribitylamino)uracil is bound at residue Phe-112. Arg-126 contacts (2S)-2-hydroxy-3-oxobutyl phosphate.

It belongs to the DMRL synthase family. As to quaternary structure, forms an icosahedral capsid composed of 60 subunits, arranged as a dodecamer of pentamers.

It carries out the reaction (2S)-2-hydroxy-3-oxobutyl phosphate + 5-amino-6-(D-ribitylamino)uracil = 6,7-dimethyl-8-(1-D-ribityl)lumazine + phosphate + 2 H2O + H(+). The protein operates within cofactor biosynthesis; riboflavin biosynthesis; riboflavin from 2-hydroxy-3-oxobutyl phosphate and 5-amino-6-(D-ribitylamino)uracil: step 1/2. Its function is as follows. Catalyzes the formation of 6,7-dimethyl-8-ribityllumazine by condensation of 5-amino-6-(D-ribitylamino)uracil with 3,4-dihydroxy-2-butanone 4-phosphate. This is the penultimate step in the biosynthesis of riboflavin. The chain is 6,7-dimethyl-8-ribityllumazine synthase from Bacillus cereus (strain B4264).